The primary structure comprises 114 residues: Ribosome-binding factor A (114 aa).

This sequence belongs to the RbfA family. As to quaternary structure, monomer. Binds 30S ribosomal subunits, but not 50S ribosomal subunits or 70S ribosomes.

Its subcellular location is the cytoplasm. Its function is as follows. One of several proteins that assist in the late maturation steps of the functional core of the 30S ribosomal subunit. Associates with free 30S ribosomal subunits (but not with 30S subunits that are part of 70S ribosomes or polysomes). Required for efficient processing of 16S rRNA. May interact with the 5'-terminal helix region of 16S rRNA. This chain is Ribosome-binding factor A, found in Listeria innocua serovar 6a (strain ATCC BAA-680 / CLIP 11262).